Here is a 314-residue protein sequence, read N- to C-terminus: Putative integrase/recombinase y4rB (314 aa).

Positions 2–79 (STFRQAVQEY…YVRVFARYRA (78 aa)) constitute a Core-binding (CB) domain. The region spanning 100-304 (ARPYLYSKED…SPELMKEAMR (205 aa)) is the Tyr recombinase domain. Catalysis depends on residues arginine 147, lysine 172, histidine 248, arginine 251, and histidine 282. Tyrosine 291 acts as the O-(3'-phospho-DNA)-tyrosine intermediate in catalysis.

The protein belongs to the 'phage' integrase family.

The chain is Putative integrase/recombinase y4rB from Sinorhizobium fredii (strain NBRC 101917 / NGR234).